We begin with the raw amino-acid sequence, 565 residues long: Arginine--tRNA ligase (565 aa).

Residues 120 to 130 (PNIAKPFHVGH) carry the 'HIGH' region motif.

Belongs to the class-I aminoacyl-tRNA synthetase family. Monomer.

It localises to the cytoplasm. It carries out the reaction tRNA(Arg) + L-arginine + ATP = L-arginyl-tRNA(Arg) + AMP + diphosphate. In Clostridium perfringens (strain 13 / Type A), this protein is Arginine--tRNA ligase.